The following is a 97-amino-acid chain: uncharacterized protein (97 aa).

This sequence belongs to the mycobacterial PE family.

Functionally, part of the ESX-1 / type VII specialized secretion system (T7SS), which exports several proteins including EsxA and EsxB. Plays a role in DNA conjugation, in at least a donor strain. This is an uncharacterized protein from Mycolicibacterium smegmatis (strain ATCC 700084 / mc(2)155) (Mycobacterium smegmatis).